The sequence spans 160 residues: Phosphopantetheine adenylyltransferase (160 aa).

Ser10 contributes to the substrate binding site. Residues 10–11 (SF) and His18 contribute to the ATP site. Substrate is bound by residues Lys42, Leu74, and Arg88. ATP contacts are provided by residues 89–91 (GLR), Glu99, and 124–130 (YSFLSSS).

The protein belongs to the bacterial CoaD family. As to quaternary structure, homohexamer. It depends on Mg(2+) as a cofactor.

Its subcellular location is the cytoplasm. It carries out the reaction (R)-4'-phosphopantetheine + ATP + H(+) = 3'-dephospho-CoA + diphosphate. It participates in cofactor biosynthesis; coenzyme A biosynthesis; CoA from (R)-pantothenate: step 4/5. Its function is as follows. Reversibly transfers an adenylyl group from ATP to 4'-phosphopantetheine, yielding dephospho-CoA (dPCoA) and pyrophosphate. The protein is Phosphopantetheine adenylyltransferase of Bacillus pumilus (strain SAFR-032).